Consider the following 141-residue polypeptide: Large ribosomal subunit protein uL11 (141 aa).

The protein belongs to the universal ribosomal protein uL11 family. In terms of assembly, part of the ribosomal stalk of the 50S ribosomal subunit. Interacts with L10 and the large rRNA to form the base of the stalk. L10 forms an elongated spine to which L12 dimers bind in a sequential fashion forming a multimeric L10(L12)X complex. Post-translationally, one or more lysine residues are methylated.

In terms of biological role, forms part of the ribosomal stalk which helps the ribosome interact with GTP-bound translation factors. In Leptospira biflexa serovar Patoc (strain Patoc 1 / Ames), this protein is Large ribosomal subunit protein uL11.